The chain runs to 219 residues: UPF0376 protein C36C5.12 (219 aa).

Residues M1–S20 are Cytoplasmic-facing. The helical; Signal-anchor for type II membrane protein transmembrane segment at F21–A43 threads the bilayer. Residues E44 to G219 are Extracellular-facing. N-linked (GlcNAc...) asparagine glycosylation is found at N104 and N204.

Belongs to the UPF0376 family.

The protein localises to the membrane. The chain is UPF0376 protein C36C5.12 from Caenorhabditis elegans.